The sequence spans 209 residues: Dual-specificity protein phosphatase SDP1 (209 aa).

Polar residues predominate over residues 1 to 11 (MNIYTSPTRTP). The disordered stretch occupies residues 1 to 43 (MNIYTSPTRTPNIAPKSGQRPSLPMLATDERSTDKESPNEDRE). The segment covering 28 to 43 (TDERSTDKESPNEDRE) has biased composition (basic and acidic residues). Cys-47 and Cys-142 are disulfide-bonded. The Tyrosine-protein phosphatase domain occupies 59–196 (GPLLVLPEKI…LMEWEVALNA (138 aa)). His-111 is a binding site for 4-O-phospho-L-tyrosine. Cys-140 acts as the Phosphocysteine intermediate in catalysis.

This sequence belongs to the protein-tyrosine phosphatase family. Non-receptor class dual specificity subfamily.

The enzyme catalyses O-phospho-L-tyrosyl-[protein] + H2O = L-tyrosyl-[protein] + phosphate. Mediates dephosphorylation of MAPK substrates such as SLT2, acquiring enhanced catalytic activity under oxidative conditions. The sequence is that of Dual-specificity protein phosphatase SDP1 (SDP1) from Saccharomyces cerevisiae (strain ATCC 204508 / S288c) (Baker's yeast).